The following is a 97-amino-acid chain: Theromacin (97 aa).

An N-terminal signal peptide occupies residues 1-22 (MELKSGLSILLCFGICIAVINA). 5 disulfides stabilise this stretch: Cys-24–Cys-31, Cys-46–Cys-50, Cys-53–Cys-95, Cys-61–Cys-69, and Cys-79–Cys-81.

Coelomic liquid (at protein level). Expressed in large fat cells in contact with coelomic cavities, in intestinal epithelia and at the epidermis level.

The protein localises to the secreted. Its function is as follows. Has a bactericidal activity. Active against M.luteus. No activity toward E.coli and F.oxysporum. In Theromyzon tessulatum (Duck leech), this protein is Theromacin.